A 384-amino-acid chain; its full sequence is MYINTETEDLKTAIDAIRKAVKDRIAPLAAEVDDSGVIKPEIYDLLWDLGLMTVTYPPEYGGSETNPGTLLCIGCEEIAKACASTALLLIIQAVGSFPLMHGGRKELLDRIAPRIVNNRELAGYLVSEPGAGSDVKAIRTKAVKDGNDWVINGTKCWATNGPIASFYSCLCRTKDDKGVQGYSFFLVERNTPGLSVGKIEHKMGMRGSQTSEVILEDVRVPAENLLGELNNGFKLAMKDFDMSRPAIAAQALGISEGAFAQMETYSRERYTFGKPLCEHGMITQIIADSAALIEAGRGLIYQAADLYDKGKKNTKLASMAKFFMGDAAVKITTDAIQVFGGYGYTHDYPVERMFRDAKLTQIFEGANQIQRIVVAREIRDEQSK.

The protein belongs to the acyl-CoA dehydrogenase family. As to quaternary structure, homotetramer. FAD serves as cofactor.

It carries out the reaction cyclohexane-1-carbonyl-CoA + oxidized [electron-transfer flavoprotein] + H(+) = cyclohex-1-ene-1-carbonyl-CoA + reduced [electron-transfer flavoprotein]. In terms of biological role, mediates the conversion of cyclohexane-1-carbonyl-CoA (ChCoA) into cyclohex-1-ene-1-carbonyl-CoA in biosynthesis of cyclohexane-1-carboxylate, a by-product produced during fermentation of benzoate and crotonate to acetate. The chain is Cyclohexane-1-carbonyl-CoA dehydrogenase from Syntrophus aciditrophicus (strain SB).